The primary structure comprises 383 residues: Galactokinase (383 aa).

34-37 contacts substrate; that stretch reads EHTD. 124-130 contributes to the ATP binding site; it reads GAGLSSS. Mg(2+) contacts are provided by Ser-130 and Glu-162. Residue Asp-174 is the Proton acceptor of the active site. Residue Tyr-223 participates in substrate binding.

The protein belongs to the GHMP kinase family. GalK subfamily.

It is found in the cytoplasm. It catalyses the reaction alpha-D-galactose + ATP = alpha-D-galactose 1-phosphate + ADP + H(+). Its pathway is carbohydrate metabolism; galactose metabolism. Its function is as follows. Catalyzes the transfer of the gamma-phosphate of ATP to D-galactose to form alpha-D-galactose-1-phosphate (Gal-1-P). This chain is Galactokinase, found in Serratia proteamaculans (strain 568).